We begin with the raw amino-acid sequence, 525 residues long: D-arabinono-1,4-lactone oxidase (525 aa).

Residues 20–195 enclose the FAD-binding PCMH-type domain; the sequence is IYSSRPEWYF…VGATVRVVPA (176 aa). His-58 bears the Pros-8alpha-FAD histidine mark.

Belongs to the oxygen-dependent FAD-linked oxidoreductase family. The cofactor is FAD.

It localises to the mitochondrion membrane. The enzyme catalyses D-arabinono-1,4-lactone + O2 = dehydro-D-arabinono-1,4-lactone + H2O2 + H(+). It functions in the pathway cofactor biosynthesis; D-erythroascorbate biosynthesis; dehydro-D-arabinono-1,4-lactone from D-arabinose: step 2/2. The protein is D-arabinono-1,4-lactone oxidase (ALO1) of Candida glabrata (strain ATCC 2001 / BCRC 20586 / JCM 3761 / NBRC 0622 / NRRL Y-65 / CBS 138) (Yeast).